Here is a 208-residue protein sequence, read N- to C-terminus: Uracil phosphoribosyltransferase (208 aa).

5-phospho-alpha-D-ribose 1-diphosphate contacts are provided by residues arginine 78, arginine 103, and 130–138 (DPMLATGGS). Uracil contacts are provided by residues isoleucine 193 and 198–200 (GDA). 5-phospho-alpha-D-ribose 1-diphosphate is bound at residue aspartate 199.

It belongs to the UPRTase family. Mg(2+) is required as a cofactor.

The enzyme catalyses UMP + diphosphate = 5-phospho-alpha-D-ribose 1-diphosphate + uracil. The protein operates within pyrimidine metabolism; UMP biosynthesis via salvage pathway; UMP from uracil: step 1/1. Its activity is regulated as follows. Allosterically activated by GTP. Catalyzes the conversion of uracil and 5-phospho-alpha-D-ribose 1-diphosphate (PRPP) to UMP and diphosphate. The chain is Uracil phosphoribosyltransferase from Histophilus somni (strain 129Pt) (Haemophilus somnus).